The sequence spans 571 residues: Proline--tRNA ligase (571 aa).

This sequence belongs to the class-II aminoacyl-tRNA synthetase family. ProS type 1 subfamily. In terms of assembly, homodimer.

The protein localises to the cytoplasm. The enzyme catalyses tRNA(Pro) + L-proline + ATP = L-prolyl-tRNA(Pro) + AMP + diphosphate. Its function is as follows. Catalyzes the attachment of proline to tRNA(Pro) in a two-step reaction: proline is first activated by ATP to form Pro-AMP and then transferred to the acceptor end of tRNA(Pro). As ProRS can inadvertently accommodate and process non-cognate amino acids such as alanine and cysteine, to avoid such errors it has two additional distinct editing activities against alanine. One activity is designated as 'pretransfer' editing and involves the tRNA(Pro)-independent hydrolysis of activated Ala-AMP. The other activity is designated 'posttransfer' editing and involves deacylation of mischarged Ala-tRNA(Pro). The misacylated Cys-tRNA(Pro) is not edited by ProRS. This Aliivibrio fischeri (strain MJ11) (Vibrio fischeri) protein is Proline--tRNA ligase.